Reading from the N-terminus, the 615-residue chain is Sorting nexin-41 (615 aa).

The tract at residues 1 to 71 is disordered; it reads MWNDEDNNPY…DEGDYVGQAN (71 aa). Residues 42-53 show a composition bias toward low complexity; it reads SHSSNPDISDFS. The 118-residue stretch at 93 to 210 folds into the PX domain; sequence PDMPILITDA…RFLDPNVSWS (118 aa). Arg-127, Ser-129, Lys-153, and Arg-176 together coordinate a 1,2-diacyl-sn-glycero-3-phospho-(1D-myo-inositol-3-phosphate). Disordered regions lie at residues 218–277 and 432–504; these read ASSV…RFPP and QYLN…RKTS. Polar residues-rich tracts occupy residues 252-263 and 434-446; these read LKSTSGTSSSPN and LNRT…TKQR. Over residues 447–456 the composition is skewed to low complexity; it reads SLSTSSATSS.

This sequence belongs to the sorting nexin family.

It is found in the endosome membrane. Its subcellular location is the endomembrane system. May be required for cytoplasm to vacuole transport (Cvt) and pexophagy. The chain is Sorting nexin-41 (snx41) from Emericella nidulans (strain FGSC A4 / ATCC 38163 / CBS 112.46 / NRRL 194 / M139) (Aspergillus nidulans).